The sequence spans 605 residues: Probable serine/threonine-protein kinase DDB_G0286481 (605 aa).

A helical transmembrane segment spans residues Tyr-5–Ile-25. Asn-53 carries an N-linked (GlcNAc...) asparagine glycan. Composition is skewed to low complexity over residues Ser-54–Asn-81 and Asn-89–Asn-104. The disordered stretch occupies residues Ser-54–Gln-170. Asn-92, Asn-93, Asn-97, and Asn-101 each carry an N-linked (GlcNAc...) asparagine glycan. The span at Ile-105 to Ser-123 shows a compositional bias: basic residues. N-linked (GlcNAc...) asparagine glycosylation is present at Asn-127. Residues Gln-144–Gln-155 are compositionally biased toward polar residues. Asn-280 carries N-linked (GlcNAc...) asparagine glycosylation. The region spanning Tyr-312–Phe-597 is the Protein kinase domain. Residues Ile-318–Val-326 and Lys-341 contribute to the ATP site. The N-linked (GlcNAc...) asparagine glycan is linked to Asn-390. The active-site Proton acceptor is the Asp-429. Residue Asn-601 is glycosylated (N-linked (GlcNAc...) asparagine).

It belongs to the protein kinase superfamily. CMGC Ser/Thr protein kinase family.

The protein resides in the membrane. The enzyme catalyses L-seryl-[protein] + ATP = O-phospho-L-seryl-[protein] + ADP + H(+). The catalysed reaction is L-threonyl-[protein] + ATP = O-phospho-L-threonyl-[protein] + ADP + H(+). This is Probable serine/threonine-protein kinase DDB_G0286481 from Dictyostelium discoideum (Social amoeba).